A 249-amino-acid chain; its full sequence is Probable transcriptional regulatory protein Sfum_0996 (249 aa).

Belongs to the TACO1 family.

The protein resides in the cytoplasm. This is Probable transcriptional regulatory protein Sfum_0996 from Syntrophobacter fumaroxidans (strain DSM 10017 / MPOB).